The sequence spans 242 residues: Beta-carotene ketolase (242 aa).

It carries out the reaction all-trans-beta-carotene + 2 AH2 + 2 O2 = echinenone + 2 A + 3 H2O. The catalysed reaction is echinenone + 2 AH2 + 2 O2 = canthaxanthin + 2 A + 3 H2O. It participates in carotenoid biosynthesis; astaxanthin biosynthesis. Functionally, converts beta-carotene to canthaxanthin via echinenone. This is Beta-carotene ketolase (crtW) from Paracoccus sp. (strain N81106 / MBIC 01143) (Agrobacterium aurantiacum).